The primary structure comprises 121 residues: Putative SNURF-like protein (121 aa).

It belongs to the SNURF family.

The polypeptide is Putative SNURF-like protein (SNURFL) (Homo sapiens (Human)).